The sequence spans 288 residues: 4-diphosphocytidyl-2-C-methyl-D-erythritol kinase (288 aa).

K13 is an active-site residue. Position 96-106 (96-106 (PMGGGIGGGSS)) interacts with ATP. The active site involves D138.

The protein belongs to the GHMP kinase family. IspE subfamily.

The catalysed reaction is 4-CDP-2-C-methyl-D-erythritol + ATP = 4-CDP-2-C-methyl-D-erythritol 2-phosphate + ADP + H(+). Its pathway is isoprenoid biosynthesis; isopentenyl diphosphate biosynthesis via DXP pathway; isopentenyl diphosphate from 1-deoxy-D-xylulose 5-phosphate: step 3/6. Its function is as follows. Catalyzes the phosphorylation of the position 2 hydroxy group of 4-diphosphocytidyl-2C-methyl-D-erythritol. The polypeptide is 4-diphosphocytidyl-2-C-methyl-D-erythritol kinase (Aliivibrio fischeri (strain MJ11) (Vibrio fischeri)).